A 91-amino-acid polypeptide reads, in one-letter code: MAKRTKKVGVVGKYGTRYGASLRKQVKKMEITQHGTYTCSFCGKDAVRRSSVGIWKCNGCRKVLAGGAWTMSTAAGATVRSTIRRLRELNN.

The C4-type zinc-finger motif lies at 39 to 60 (CSFCGKDAVRRSSVGIWKCNGC).

Belongs to the eukaryotic ribosomal protein eL43 family.

The chain is Large ribosomal subunit protein eL43 (rpl37A) from Dictyostelium discoideum (Social amoeba).